Here is a 259-residue protein sequence, read N- to C-terminus: uncharacterized protein (259 aa).

The protein belongs to the chlamydial CPn_0128/CT_035/TC_0305 family.

This is an uncharacterized protein from Chlamydia muridarum (strain MoPn / Nigg).